The chain runs to 483 residues: Regulatory protein ViaA (483 aa).

It belongs to the ViaA family. As to quaternary structure, homodimer. Interacts with RavA.

Its subcellular location is the cytoplasm. Component of the RavA-ViaA chaperone complex, which may act on the membrane to optimize the function of some of the respiratory chains. ViaA stimulates the ATPase activity of RavA. This Shigella boydii serotype 18 (strain CDC 3083-94 / BS512) protein is Regulatory protein ViaA.